The primary structure comprises 213 residues: 2',3'-cyclic-nucleotide 3'-phosphodiesterase (213 aa).

Residue His39 is the Proton donor/acceptor of the active site. Thr41 serves as a coordination point for substrate. The active-site Proton donor/acceptor is His132. Positions 134 and 137 each coordinate substrate.

It belongs to the 2H phosphoesterase superfamily. CPD1 family.

Its subcellular location is the golgi apparatus. The enzyme catalyses a nucleoside 2',3'-cyclic phosphate + H2O = a nucleoside 2'-phosphate + H(+). Functionally, involved in the metabolism of ADP-ribose 1',2'-cyclic phosphate which is produced as a consequence of tRNA splicing. The sequence is that of 2',3'-cyclic-nucleotide 3'-phosphodiesterase (CPD1) from Kluyveromyces lactis (strain ATCC 8585 / CBS 2359 / DSM 70799 / NBRC 1267 / NRRL Y-1140 / WM37) (Yeast).